A 214-amino-acid chain; its full sequence is Adenylate kinase (214 aa).

Gly-10–Thr-15 contacts ATP. An NMP region spans residues Ser-30–Val-59. AMP-binding positions include Thr-31, Arg-36, Lys-57 to Val-59, Gly-85 to Arg-88, and Gln-92. Positions Gly-122–Asp-159 are LID. Residues Arg-123 and Val-132–Tyr-133 each bind ATP. Residues Arg-156 and Arg-167 each coordinate AMP. Position 200 (Lys-200) interacts with ATP.

It belongs to the adenylate kinase family. In terms of assembly, monomer.

The protein resides in the cytoplasm. It catalyses the reaction AMP + ATP = 2 ADP. It participates in purine metabolism; AMP biosynthesis via salvage pathway; AMP from ADP: step 1/1. In terms of biological role, catalyzes the reversible transfer of the terminal phosphate group between ATP and AMP. Plays an important role in cellular energy homeostasis and in adenine nucleotide metabolism. This chain is Adenylate kinase, found in Pseudoalteromonas atlantica (strain T6c / ATCC BAA-1087).